Here is a 61-residue protein sequence, read N- to C-terminus: UPF0434 protein Nmul_A1027 (61 aa).

The protein belongs to the UPF0434 family.

In Nitrosospira multiformis (strain ATCC 25196 / NCIMB 11849 / C 71), this protein is UPF0434 protein Nmul_A1027.